The chain runs to 1250 residues: MARLTAEFGDRIYYNQVMDRGAMRQLIGRLIIYLGSNCTSQILDQLKTLGFRHATQAGISLGVDDLITTPSKTWLIRDAEYQAYTSEEQYRRGSIHAVEKLRHVVETWHTTSEYLKREMTSHFRITDPLNPVHIMSFSGARGNVSQVHQLVGMRGLMANPQGNIIDLPIQSNLREGLSLTEYIISCYGARKGVVDTAVRTADAGYLTRRLVEVVQHVVIRNPDCETNQGIRLHSIRDRKTTRDAGGNSLLSLQERLIGRVLARNVFLGKRCIAIKNQDLAPDLVNSLVNFPKALLSPGSEGGHCEILVRSPLTCKSMPRACQKCYGWDLSCGNLVEIGAAIGIVAGQSIGEPGTQLTLRTFHTGGVFTGGVAEHVRAPFNGIVHFSISSSTHKTKTIQPTRNRHGRPAWTCPEAFSVIIEDRIGKKKVLNVPQYSLLLVKNHQYVQSRQIIAEVRASIAPLKEKIEKNIYSHLQGEVFYNPIGLRASCLKQRHFLHFLCSASRMNLWIEFASIRSYLSPLVEKTSYIWIFSGRLNKFFNATLNLSFFYQTQDYIQRDLPIGIQNHVFNYSKVFLLSIYNRQRSVTFSVSRRDIRLGRKKKFTDYIPLSRISTDKIFSKHTGSIHTISEQNEWILTLSFVDQFSKKMFSSVQTPGTSKVSEKSEEQIIDFQEQLILNYPLSKTTIFLKEPSILAKNYSIAEKDSCIGLLGEFFIFLNELSIVSVRTFISTSQINLFLKKNVFSLLCITHGNTFKGKEKIFFINDSKNIYNIKNWLISVNFLIWCHFSNRILNKNQTLATIFLSNRSLRNEKDLQVKEFKIGQSICPSRDLGEKIFEPFTHSILPESGHLLSLNEGNLLIRLAKLYLIPTGGIAHTFHKQTINEGDTLVTLAYERLKASDIIQGLPKAEQLLEARVGNQVVINLYMRFEILVARIKEQLRNYIGSLTQMDLMLSQISVNRASKALEYSQLETVDQVQKVYLSQGVYISDKHFEVIVRQMSSKIAIVENTDFTAFSPKAVIRTAFPYDVLGVFFPGEILDISKAQKMNRVLYKPLPCKPVLLGITQASLNANSFLSEASFERTITVLSRSALQGRMDWLKGLKENVLLSKMIPAGTGLKQAPVLLSPNGTGTLFSNNEQNIFQKKNVTSLSKSKGQKVQIRKIFSFQKSPQRLSFLYQETSSSNIRRKIQPTVCLCKPFITKRNWLHISLKQLTEQSLNYETKKFCLQELTNNFIPRKKENIFYLKKKTIKTT.

Zn(2+)-binding residues include Cys-224, Cys-314, Cys-321, and Cys-324.

It belongs to the RNA polymerase beta' chain family. RpoC2 subfamily. In terms of assembly, in plastids the minimal PEP RNA polymerase catalytic core is composed of four subunits: alpha, beta, beta', and beta''. When a (nuclear-encoded) sigma factor is associated with the core the holoenzyme is formed, which can initiate transcription. It depends on Zn(2+) as a cofactor.

It is found in the plastid. The protein resides in the chloroplast. The enzyme catalyses RNA(n) + a ribonucleoside 5'-triphosphate = RNA(n+1) + diphosphate. In terms of biological role, DNA-dependent RNA polymerase catalyzes the transcription of DNA into RNA using the four ribonucleoside triphosphates as substrates. In Staurastrum punctulatum (Green alga), this protein is DNA-directed RNA polymerase subunit beta''.